The primary structure comprises 95 residues: Defensin (95 aa).

The N-terminal stretch at 1–17 (MKNYVFALLVVTAVAIA) is a signal peptide. Residues 18 to 55 (LPNEDKNAPMRVHLLPQKEDESLKLEVTPVKEHHRTRR) constitute a propeptide that is removed on maturation. 3 disulfides stabilise this stretch: C58–C85, C71–C91, and C75–C93.

This sequence belongs to the invertebrate defensin family. Type 1 subfamily.

It is found in the secreted. In terms of biological role, antibacterial peptide mostly active against Gram-positive bacteria. In Formica aquilonia (Red wood ant), this protein is Defensin.